The following is a 197-amino-acid chain: RNA-binding protein Rsf1 (197 aa).

Residues 7 to 80 (TRVYVGNLTD…SQLRVEISKG (74 aa)) enclose the RRM domain. A disordered region spans residues 74–197 (RVEISKGRPR…SRSPVGNHRF (124 aa)). Positions 89–102 (GPMDRGGRRGDFGR) are enriched in basic and acidic residues. Position 106 is a phosphothreonine (Thr106). Low complexity-rich tracts occupy residues 117–144 (QRGS…SYNG) and 166–176 (RYSSGSSASYG). Ser168, Ser171, Ser174, Ser188, and Ser190 each carry phosphoserine.

The protein belongs to the splicing factor SR family. In terms of processing, extensively phosphorylated on serine residues in the RS domain.

Its subcellular location is the nucleus. May control important aspects of development. In Drosophila melanogaster (Fruit fly), this protein is RNA-binding protein Rsf1 (Rsf1).